The sequence spans 386 residues: Succinate--CoA ligase [ADP-forming] subunit beta (386 aa).

The ATP-grasp domain maps to 9-244; the sequence is KELLKQFGVP…LDEEDPAEIE (236 aa). Residues Lys46, 53-55, Glu99, Ala102, and Glu107 contribute to the ATP site; that span reads GRG. The Mg(2+) site is built by Asn199 and Asp213. Residues Asn264 and 321–323 each bind substrate; that span reads GIM.

This sequence belongs to the succinate/malate CoA ligase beta subunit family. Heterotetramer of two alpha and two beta subunits. Requires Mg(2+) as cofactor.

It catalyses the reaction succinate + ATP + CoA = succinyl-CoA + ADP + phosphate. The enzyme catalyses GTP + succinate + CoA = succinyl-CoA + GDP + phosphate. It functions in the pathway carbohydrate metabolism; tricarboxylic acid cycle; succinate from succinyl-CoA (ligase route): step 1/1. In terms of biological role, succinyl-CoA synthetase functions in the citric acid cycle (TCA), coupling the hydrolysis of succinyl-CoA to the synthesis of either ATP or GTP and thus represents the only step of substrate-level phosphorylation in the TCA. The beta subunit provides nucleotide specificity of the enzyme and binds the substrate succinate, while the binding sites for coenzyme A and phosphate are found in the alpha subunit. The sequence is that of Succinate--CoA ligase [ADP-forming] subunit beta from Bordetella petrii (strain ATCC BAA-461 / DSM 12804 / CCUG 43448).